The primary structure comprises 470 residues: Acetyl-CoA decarbonylase/synthase complex subunit gamma 1 (470 aa).

The 4Fe-4S domain maps to 1–60 (MKINSPLEAYKYLPQTNCGECGQPTCMAFASTLIDRSGKTTDCPPLIKEKKFAKKLAELD). Cys18, Cys21, Cys26, and Cys43 together coordinate [4Fe-4S] cluster.

Heterodimer of delta and gamma chains. The ACDS complex is made up of alpha, epsilon, beta, gamma and delta chains with a probable stoichiometry of (alpha(2)epsilon(2))(4)-beta(8)-(gamma(1)delta(1))(8). It depends on corrinoid as a cofactor. [4Fe-4S] cluster serves as cofactor.

The enzyme catalyses 5,6,7,8-tetrahydrosarcinapterin + methyl-Co(III)-[corrinoid Fe-S protein] = 5-methyltetrahydrosarcinapterin + Co(I)-[corrinoid Fe-S protein] + H(+). It functions in the pathway one-carbon metabolism; methanogenesis from acetate. Functionally, part of a complex that catalyzes the reversible cleavage of acetyl-CoA, allowing growth on acetate as sole source of carbon and energy. This is Acetyl-CoA decarbonylase/synthase complex subunit gamma 1 from Methanosarcina mazei (strain ATCC BAA-159 / DSM 3647 / Goe1 / Go1 / JCM 11833 / OCM 88) (Methanosarcina frisia).